The following is a 410-amino-acid chain: Multifunctional CCA protein (410 aa).

ATP is bound by residues G8 and R11. G8 and R11 together coordinate CTP. Mg(2+)-binding residues include E21 and D23. Residues R91, R137, and R140 each coordinate ATP. Residues R91, R137, and R140 each contribute to the CTP site. Positions 228-329 (TGIHSLMALR…VKLLEQVDAF (102 aa)) constitute an HD domain.

The protein belongs to the tRNA nucleotidyltransferase/poly(A) polymerase family. Bacterial CCA-adding enzyme type 1 subfamily. As to quaternary structure, monomer. Can also form homodimers and oligomers. Mg(2+) serves as cofactor. Requires Ni(2+) as cofactor.

It carries out the reaction a tRNA precursor + 2 CTP + ATP = a tRNA with a 3' CCA end + 3 diphosphate. It catalyses the reaction a tRNA with a 3' CCA end + 2 CTP + ATP = a tRNA with a 3' CCACCA end + 3 diphosphate. Functionally, catalyzes the addition and repair of the essential 3'-terminal CCA sequence in tRNAs without using a nucleic acid template. Adds these three nucleotides in the order of C, C, and A to the tRNA nucleotide-73, using CTP and ATP as substrates and producing inorganic pyrophosphate. tRNA 3'-terminal CCA addition is required both for tRNA processing and repair. Also involved in tRNA surveillance by mediating tandem CCA addition to generate a CCACCA at the 3' terminus of unstable tRNAs. While stable tRNAs receive only 3'-terminal CCA, unstable tRNAs are marked with CCACCA and rapidly degraded. The polypeptide is Multifunctional CCA protein (Legionella pneumophila (strain Paris)).